Reading from the N-terminus, the 465-residue chain is Alpha-2A adrenergic receptor (465 aa).

The Extracellular portion of the chain corresponds to 1 to 48; the sequence is MFRQEQPLAEGSFAPMGSLQPDAGNSSWNGTEAPGGGTRATPYSLQVT. 2 N-linked (GlcNAc...) asparagine glycosylation sites follow: asparagine 25 and asparagine 29. Residues 49–74 form a helical membrane-spanning segment; the sequence is LTLVCLAGLLMLFTVFGNVLVIIAVF. Topologically, residues 75 to 85 are cytoplasmic; sequence TSRALKAPQNL. The chain crosses the membrane as a helical span at residues 86 to 111; the sequence is FLVSLASADILVATLVIPFSLANEVM. Residues 112–121 are Extracellular-facing; sequence GYWYFGKVWC. A disulfide bridge links cysteine 121 with cysteine 203. The helical transmembrane segment at 122–144 threads the bilayer; that stretch reads EIYLALDVLFCTSSIVHLCAISL. Over 145 to 164 the chain is Cytoplasmic; the sequence is DRYWSITQAIEYNLKRTPRR. Residues 165-188 traverse the membrane as a helical segment; it reads IKAIIVTVWVISAVISFPPLISIE. Over 189–207 the chain is Extracellular; that stretch reads KKGAGGGQQPAEPSCKIND. Residues 208 to 232 form a helical membrane-spanning segment; it reads QKWYVISSSIGSFFAPCLIMILVYV. Topologically, residues 233-389 are cytoplasmic; sequence RIYQIAKRRT…RQNREKRFTF (157 aa). A disordered region spans residues 242–377; it reads TRVPPSRRGP…RAGGAKASRW (136 aa). Residues 313-330 show a composition bias toward basic and acidic residues; sequence SSEHAERPQGPGKPERGP. Residue serine 346 is modified to Phosphoserine. Residues 353 to 364 are compositionally biased toward gly residues; that stretch reads GAAGPGASGSGQ. Arginine 368 is subject to Omega-N-methylarginine. A helical membrane pass occupies residues 390–414; it reads VLAVVIGVFVVCWFPFFFTYTLIAV. At 415–424 the chain is on the extracellular side; the sequence is GCPVPYQLFN. Residues 425-445 traverse the membrane as a helical segment; it reads FFFWFGYCNSSLNPVIYTIFN. The Cytoplasmic segment spans residues 446 to 465; that stretch reads HDFRRAFKKILCRGDRKRIV. The S-palmitoyl cysteine moiety is linked to residue cysteine 457.

The protein belongs to the G-protein coupled receptor 1 family. Adrenergic receptor subfamily. ADRA2A sub-subfamily. As to expression, expressed in brain.

It localises to the cell membrane. Alpha-2 adrenergic receptors mediate the catecholamine-induced inhibition of adenylate cyclase through the action of G proteins. In Rattus norvegicus (Rat), this protein is Alpha-2A adrenergic receptor.